The sequence spans 226 residues: PKHD-type hydroxylase Sfri_0612 (226 aa).

The region spanning 77-177 is the Fe2OG dioxygenase domain; it reads KIFPPCFNRY…RIAAITWMQS (101 aa). Residues histidine 95, aspartate 97, and histidine 158 each contribute to the Fe cation site. 2-oxoglutarate is bound at residue arginine 168.

Requires Fe(2+) as cofactor. The cofactor is L-ascorbate.

The protein is PKHD-type hydroxylase Sfri_0612 of Shewanella frigidimarina (strain NCIMB 400).